The following is a 1671-amino-acid chain: MAQQQQQQLQQQQQHHTSSINNNNSILLLHQQQPQQQQQQQLDQLQQYNNNLYSQNYNMEEYERRKRREREKIERQQGIQIDDRETSLFGEPRRLTEGDAEITAALGEFFEARVYINNQTVGISRSAPGAGNPRLQPNLPPQAKSLGHSPSSASSAAGPTSASATTALPGQQQHYQQQQRPPTYVKQADNKPPYNGRGGYPGQPMKNDIPSSSGMAPPRGPPRSSSSNSNSSSATNNASSGGVPANTPLGPPLSTQMPNGREKSFLGPPAPALHNGTGGGRFVPPAASKRPGVGQQPPPPEKDVNKIISDIANIFSVQPLTSIAATPHAPTRENYNLLAPNKQKYAMDIPSSPPSAEPSSLMTPLFTPIAPLVTTPPQASQLPLGAATSGTILAGEPLAPLHQLPPTPPKAASGVTSPGPTKPLKTEKNHSLEKQDSCLENDLELSESEDEQRKKEGRSAGNSSNSSESDSSESGSESSSKNDLQHHPNHQQHHHQLQQQQQASMQQQQVLQQQQQHRPQPLTSNGAQNKKFRHEIIARGSNTITGLLSSSGFGSGGSVGPAGVNSSAVMGAGSVSGGTLSSGGSSSNKTPSPTESNKWNLSRFFHKPANQTNSESVSPGNVSMKVPGILPGGAQIIPESIDVTTAIVKNEKIHDDHMAMEEGEEEDDDEEQQMRYGGGLSVTPVAVKKEAIDAVSEMALGAIPKTQIKRESAEALLSARLSDSGTSASGSSSSSSSSSDSAVGGEVVPMPGPGETFQLPGVPADITTVVRVPPTQSQKAPPSNSVTLTPILPLPTSPKQRQKKPRKKKAVTSAPILDSSDDDEPPPKHPGLDHSAVSVQAQPATDTVKKGRGRPRKQQQSGGSGNLSSASAGSSSQTKGPTLTAAKKPLAKTPLAMSRARKREHSSQSSSNGNTPTKKVATPVLVAAPLKPTSVTAGSSSSDEDSSSSAESSSKSSSSSSSSDDTETQNTNCRIVKLNKTGAVQKKALLGSGSSSASSSGSEPEDQTSRSQVGSGQALAQQLPPYKQLPISQHSQHLSSSECSSSSGGCTAVCSSSSGEEDEGRREKERERKPKSDKNKISTLTRIFNPKEGGAKKQGQVVIVDLQEEQQQGKLDAAAQPPPPHAPPAAPAAIMAKPRMTPTQQQQLGAGLASPARTTTPHLTSLICKIDLSKLSRERIMRLKKLTPAQQNGHLTPKDQATNAVHVPNGYAGDTNPAAKVKHEHPVKPEPELDAGYEAKFKPGNVKQEFQLKQERDRDRERERERERERERDREREQPPGRRRKRSSSSSSSPYKEKKRKKEKADQLQIGKELLPVPVLLPSNNHERMPNHDRLSYDKLQLLHEDAAAVIGDVSAANGSPTKKLLVMSPLPPPPTVTVAPATCNEAVQTTPPSATTTTATAPPVPATRLIYRSYFDRDVEHPSDDLRKNNQFLQEAINRKHAADLERDSFNQVTLYLEAVVYFLLTADAMERCSSEQATNTMYKDTLSLIKFISTKFRPYQQQSTTNIQHETHNKVAILSLRCQSLISLKLYKLRRKDCRAIINGLTDFFRVGRGDIANGNTPSSISPSNSVGSQGSGSNTPPGRIVSPDIHNMLCKQNEFLSYLNSAHELWDQADRLVRTGNHIDFIRELDHENGPLTLHSTMHEVFRYVQAGLKTLRDAVSHPTHQSQ.

Disordered stretches follow at residues 53–79, 126–304, 393–599, 723–761, 774–1162, and 1185–1311; these read YSQN…QQGI, SAPG…EKDV, LAGE…SNKW, DSGT…QLPG, PTQS…TTPH, and KLTP…LQIG. Over residues 70–79 the composition is skewed to basic and acidic residues; the sequence is REKIERQQGI. Composition is skewed to low complexity over residues 145–179 and 210–242; these read SLGH…QQQQ and PSSS…SSGG. Threonine 416 is subject to Phosphothreonine. Over residues 424-437 the composition is skewed to basic and acidic residues; that stretch reads LKTEKNHSLEKQDS. Over residues 439–450 the composition is skewed to acidic residues; that stretch reads LENDLELSESED. Serine 446 and serine 448 each carry phosphoserine. Positions 459–479 are enriched in low complexity; it reads SAGNSSNSSESDSSESGSESS. The segment covering 487-496 has biased composition (basic residues); sequence HPNHQQHHHQ. Composition is skewed to low complexity over residues 497 to 522 and 561 to 587; these read LQQQ…PQPL and PAGV…GSSS. The span at 588–599 shows a compositional bias: polar residues; it reads NKTPSPTESNKW. Residues 723-755 show a composition bias toward low complexity; it reads DSGTSASGSSSSSSSSSDSAVGGEVVPMPGPGE. The segment covering 774–786 has biased composition (polar residues); that stretch reads PTQSQKAPPSNSV. A compositionally biased stretch (basic residues) spans 800–810; that stretch reads QRQKKPRKKKA. Serine 819 and serine 820 each carry phosphoserine. The segment at residues 849-861 is a DNA-binding region (a.T hook); sequence KKGRGRPRKQQQS. Residues 858–896 show a composition bias toward low complexity; sequence QQQSGGSGNLSSASAGSSSQTKGPTLTAAKKPLAKTPLA. Phosphoserine is present on residues serine 869 and serine 871. Residues 907 to 917 are compositionally biased toward polar residues; sequence SQSSSNGNTPT. Composition is skewed to low complexity over residues 947-963 and 988-1002; these read SSSA…SSSS and ALLG…SSGS. A compositionally biased stretch (polar residues) spans 1009–1020; the sequence is SRSQVGSGQALA. Residues 1032–1058 show a composition bias toward low complexity; it reads SQHSQHLSSSECSSSSGGCTAVCSSSS. A compositionally biased stretch (basic and acidic residues) spans 1063–1080; that stretch reads EGRREKERERKPKSDKNK. Pro residues predominate over residues 1120 to 1130; the sequence is QPPPPHAPPAA. The segment covering 1188-1203 has biased composition (polar residues); sequence PAQQNGHLTPKDQATN. Basic and acidic residues-rich tracts occupy residues 1224 to 1241 and 1250 to 1280; these read EHPV…EAKF and FQLK…EQPP. Phosphoserine is present on serine 1360. At threonine 1362 the chain carries Phosphothreonine. Residues 1562-1581 show a composition bias toward low complexity; the sequence is NTPSSISPSNSVGSQGSGSN. The tract at residues 1562-1586 is disordered; the sequence is NTPSSISPSNSVGSQGSGSNTPPGR.

This sequence belongs to the AF4 family.

It localises to the nucleus. Has a role in transcriptional regulation. Acts in parallel with the Ras/MAPK and the PI3K/PKB pathways in the control of cell identity and cellular growth. Essential for regulation of the cytoskeleton and cell growth but not for cell proliferation or growth rate. Required specifically for the microtubule-based basal transport of lipid droplets. Plays a partially redundant function downstream of Raf in cell fate specification in the developing eye. Pair-rule protein that regulates embryonic cellularization, gastrulation and segmentation. The chain is AF4/FMR2 family member lilli from Drosophila yakuba (Fruit fly).